Reading from the N-terminus, the 485-residue chain is NADH-quinone oxidoreductase subunit N (485 aa).

The next 14 membrane-spanning stretches (helical) occupy residues 8–28 (LIAL…MLSI), 35–55 (FLNA…LWFV), 71–91 (GFAM…CTFA), 105–125 (FYLL…ANHL), 127–147 (ALFL…GYAF), 159–179 (YTIL…LVYA), 203–223 (LLAG…LVPF), 235–255 (PAPV…GVVM), 271–291 (VVLG…ALSQ), 297–317 (LLGY…IALQ), 326–346 (VGVY…VVSL), 373–393 (AAVM…LGFI), 408–430 (WWLV…RVAV), and 455–475 (IVVL…QPLI).

It belongs to the complex I subunit 2 family. As to quaternary structure, NDH-1 is composed of 13 different subunits. Subunits NuoA, H, J, K, L, M, N constitute the membrane sector of the complex.

It is found in the cell inner membrane. It catalyses the reaction a quinone + NADH + 5 H(+)(in) = a quinol + NAD(+) + 4 H(+)(out). Its function is as follows. NDH-1 shuttles electrons from NADH, via FMN and iron-sulfur (Fe-S) centers, to quinones in the respiratory chain. The immediate electron acceptor for the enzyme in this species is believed to be ubiquinone. Couples the redox reaction to proton translocation (for every two electrons transferred, four hydrogen ions are translocated across the cytoplasmic membrane), and thus conserves the redox energy in a proton gradient. This chain is NADH-quinone oxidoreductase subunit N, found in Salmonella schwarzengrund (strain CVM19633).